Here is a 528-residue protein sequence, read N- to C-terminus: G patch domain-containing protein 2 (528 aa).

The interval 36–119 is disordered; it reads LEESSEQARG…NKKDHSDSDD (84 aa). Positions 63–77 are enriched in basic residues; it reads RQARKRRGRKRRSYN. The span at 98-117 shows a compositional bias: basic and acidic residues; that stretch reads EPSKDYRENHNNNKKDHSDS. Residues serine 115, serine 117, serine 146, and serine 195 each carry the phosphoserine modification. Disordered stretches follow at residues 232-282 and 487-528; these read SEET…GDDE and GRDG…GKSA. The segment covering 239 to 252 has biased composition (basic and acidic residues); that stretch reads NKDKMECEEQKVSD. Positions 467-513 constitute a G-patch domain; sequence ENNIGNRMLQNMGWTPGSGLGRDGKGISEPIQAMQRPKGLGLGFPLP. The span at 514–528 shows a compositional bias: polar residues; that stretch reads KSTSATTTPNAGKSA.

In terms of assembly, interacts with DHX15. Testis.

The protein localises to the nucleus speckle. The protein resides in the nucleus. It localises to the nucleolus. Functionally, enhances the ATPase activity of DHX15 in vitro. This Homo sapiens (Human) protein is G patch domain-containing protein 2 (GPATCH2).